A 229-amino-acid polypeptide reads, in one-letter code: All-trans retinoic acid-induced differentiation factor (229 aa).

Positions 1–30 (MAPHDPGSLTTLVPWAAALLLALGVERALA) are cleaved as a signal peptide. The Extracellular segment spans residues 31 to 199 (LPEICTQCPG…YKCMRQGSFS (169 aa)). Asn44, Asn79, Asn157, and Asn168 each carry an N-linked (GlcNAc...) asparagine glycan. Residues 152 to 193 (QKNLCNNTGDPEMCPENGSCVPDGPGLLQCVCADGFHGYKCM) enclose the EGF-like domain. Disulfide bonds link Cys156–Cys171, Cys165–Cys181, and Cys183–Cys192. The helical transmembrane segment at 200–220 (LLMFFGILGATTLSVSILLWA) threads the bilayer. Residues 221–229 (TQRRKAKTS) lie on the Cytoplasmic side of the membrane.

As to quaternary structure, interacts with NELL1; the interaction promotes osteoblastic differentiation and mineralization. Interacts with SLC37A3; the interaction is direct and both proteins are mutually dependent for their stability. Weakly expressed in hematopoietic cell lines.

It localises to the nucleus envelope. Its subcellular location is the cell membrane. It is found in the lysosome membrane. In terms of biological role, promotes osteoblast cell differentiation and terminal mineralization. Plays a role in inducing the cell cycle arrest via inhibiting CCND1 expression in all-trans-retinoic acid (ATRA) signal pathway. In osteoclasts, forms a transporter complex with ATRAID for nitrogen-containing-bisphophonates (N-BPs) required for releasing N-BP molecules that have trafficked to lysosomes through fluid-phase endocytosis into the cytosol. The sequence is that of All-trans retinoic acid-induced differentiation factor from Homo sapiens (Human).